A 601-amino-acid chain; its full sequence is Somatic embryogenesis receptor kinase 5 (601 aa).

The signal sequence occupies residues 1 to 24 (MEHGSSRGFIWLILFLDFVSRVTG). The Extracellular segment spans residues 25 to 215 (KTQVDALIAL…SPSPSPSGTS (191 aa)). N-linked (GlcNAc...) asparagine glycosylation is found at N52, N81, N105, N129, N151, and N184. 5 LRR repeats span residues 71 to 94 (SVTRLDLGSANLSGELVPQLAQLP), 95 to 118 (NLQYLELFNNNITGEIPEELGDLM), 119 to 141 (ELVSLDLFANNISGPIPSSLGKL), 143 to 165 (KLRFLRLYNNSLSGEIPRSLTAL), and 166 to 188 (PLDVLDISNNRLSGDIPVNGSFS). Residues 216–236 (AAIVVGVAAGAALLFALAWWL) form a helical membrane-spanning segment. Over 237–601 (RRKLQGHFLD…IENDYPSGPR (365 aa)) the chain is Cytoplasmic. Phosphothreonine is present on T272. In terms of domain architecture, Protein kinase spans 275–572 (FSKRNVLGKG…KEEMPIHDFN (298 aa)). ATP is bound at residue 281–289 (LGKGRFGIL). At T298 the chain carries Phosphothreonine. K303 contacts ATP. 2 positions are modified to phosphoserine: S356 and S359. The active-site Proton acceptor is D402. Residues T435, T436, and T441 each carry the phosphothreonine modification. Position 449 is a phosphotyrosine (Y449). A Phosphoserine modification is found at S451. Phosphothreonine is present on T452. Phosphoserine occurs at positions 456 and 506. T532 carries the post-translational modification Phosphothreonine.

It belongs to the protein kinase superfamily. Ser/Thr protein kinase family. In terms of assembly, interacts with TMK4/BARK1. Post-translationally, autophosphorylated.

It is found in the cell membrane. The catalysed reaction is L-seryl-[protein] + ATP = O-phospho-L-seryl-[protein] + ADP + H(+). The enzyme catalyses L-threonyl-[protein] + ATP = O-phospho-L-threonyl-[protein] + ADP + H(+). Serine/threonine-kinase of unknown function. The sequence is that of Somatic embryogenesis receptor kinase 5 (SERK5) from Arabidopsis thaliana (Mouse-ear cress).